The following is a 310-amino-acid chain: Vomeronasal type-1 receptor 47 (310 aa).

Residues M1–T16 are Extracellular-facing. A helical transmembrane segment spans residues F17 to I37. The Cytoplasmic portion of the chain corresponds to K38–D49. A helical transmembrane segment spans residues L50–A70. Residues T71–L91 are Extracellular-facing. C85 and C172 are joined by a disulfide. The chain crosses the membrane as a helical span at residues Y92–L114. The Cytoplasmic segment spans residues S115–N131. A helical membrane pass occupies residues I132–I152. Topologically, residues S153 to E193 are extracellular. N159 is a glycosylation site (N-linked (GlcNAc...) asparagine). A helical transmembrane segment spans residues V194–H214. The Cytoplasmic segment spans residues R215 to Q238. Residues T239–S259 form a helical membrane-spanning segment. At S260 to T269 the chain is on the extracellular side. A helical membrane pass occupies residues C270–M290. Residues S291 to M310 are Cytoplasmic-facing.

This sequence belongs to the G-protein coupled receptor 1 family.

It localises to the cell membrane. Functionally, putative pheromone receptor implicated in the regulation of social and reproductive behavior. The polypeptide is Vomeronasal type-1 receptor 47 (Vmn1r47) (Mus musculus (Mouse)).